We begin with the raw amino-acid sequence, 233 residues long: Histidinol dehydrogenase (233 aa).

Residues serine 31, glutamine 53, and histidine 56 each contribute to the substrate site. Zn(2+)-binding residues include glutamine 53 and histidine 56. Residues glutamate 121 and histidine 122 each act as proton acceptor in the active site. Substrate-binding residues include histidine 122, aspartate 155, glutamate 209, and histidine 214. Position 155 (aspartate 155) interacts with Zn(2+). Histidine 214 is a Zn(2+) binding site.

The protein belongs to the histidinol dehydrogenase family. It depends on Zn(2+) as a cofactor.

It catalyses the reaction L-histidinol + 2 NAD(+) + H2O = L-histidine + 2 NADH + 3 H(+). Its pathway is amino-acid biosynthesis; L-histidine biosynthesis; L-histidine from 5-phospho-alpha-D-ribose 1-diphosphate: step 9/9. Catalyzes the sequential NAD-dependent oxidations of L-histidinol to L-histidinaldehyde and then to L-histidine. The protein is Histidinol dehydrogenase (hisD) of Thiocapsa roseopersicina.